The chain runs to 914 residues: Exoglucanase-2 (914 aa).

Residues 1–33 (MKRRLMKGISLLTLVFLIGIMLQLSLKSELTAY) form the signal peptide. The region spanning 763-914 (VEGVLIIQSF…SGNLVYGIEP (152 aa)) is the CBM3 domain.

The protein belongs to the glycosyl hydrolase 48 (cellulase L) family.

It carries out the reaction Hydrolysis of (1-&gt;4)-beta-D-glucosidic linkages in cellulose and cellotetraose, releasing cellobiose from the non-reducing ends of the chains.. This is Exoglucanase-2 (celY) from Thermoclostridium stercorarium (strain ATCC 35414 / DSM 8532 / NCIMB 11754) (Clostridium stercorarium).